Consider the following 413-residue polypeptide: Peptide chain release factor 1, mitochondrial (413 aa).

Gln-287 carries the post-translational modification N5-methylglutamine. A disordered region spans residues 335–363 (RLEKEEKERKARKSQVSSTNRSDKIRTYN).

It belongs to the prokaryotic/mitochondrial release factor family. In terms of processing, methylation of glutamine in the GGQ triplet is conserved from bacteria to mammals. N5-methylated on Gln-287 by MTQ1.

Its subcellular location is the mitochondrion. Mitochondrial peptide chain release factor that directs the termination of translation in response to the peptide chain termination codons UAA and UAG. In Saccharomyces cerevisiae (strain ATCC 204508 / S288c) (Baker's yeast), this protein is Peptide chain release factor 1, mitochondrial (MRF1).